The following is a 295-amino-acid chain: Protoheme IX farnesyltransferase 2 (295 aa).

Helical transmembrane passes span 9–29 (ITKP…FFLA), 36–56 (FALF…GCVF), 83–103 (LPLA…LLYV), 108–128 (LSAF…SLWL), 135–155 (GTLV…CAVS), 163–183 (VTLL…IAIF), 209–229 (IVLY…GGYA), 230–250 (GLGY…MAWG), and 264–284 (VFGF…VDSQ).

The protein belongs to the UbiA prenyltransferase family. Protoheme IX farnesyltransferase subfamily.

The protein resides in the cell inner membrane. It catalyses the reaction heme b + (2E,6E)-farnesyl diphosphate + H2O = Fe(II)-heme o + diphosphate. Its pathway is porphyrin-containing compound metabolism; heme O biosynthesis; heme O from protoheme: step 1/1. Converts heme B (protoheme IX) to heme O by substitution of the vinyl group on carbon 2 of heme B porphyrin ring with a hydroxyethyl farnesyl side group. This chain is Protoheme IX farnesyltransferase 2, found in Pseudomonas putida (strain GB-1).